A 110-amino-acid chain; its full sequence is UPF0122 protein SPG_1182 (110 aa).

This sequence belongs to the UPF0122 family.

In terms of biological role, might take part in the signal recognition particle (SRP) pathway. This is inferred from the conservation of its genetic proximity to ftsY/ffh. May be a regulatory protein. This chain is UPF0122 protein SPG_1182, found in Streptococcus pneumoniae serotype 19F (strain G54).